Reading from the N-terminus, the 363-residue chain is Adenosine kinase (363 aa).

Mg(2+) contacts are provided by Ala-185, Ile-188, and Ala-191. Residue Asp-318 is part of the active site.

It belongs to the carbohydrate kinase PfkB family. It depends on Mg(2+) as a cofactor.

It carries out the reaction adenosine + ATP = AMP + ADP + H(+). It functions in the pathway purine metabolism; AMP biosynthesis via salvage pathway; AMP from adenosine: step 1/1. Functionally, ATP-dependent phosphorylation of adenosine and other related nucleoside analogs to monophosphate derivatives. It is a key purine metabolic enzyme in the opportunistic parasitic protozoan toxoplasma gondii as it cannot synthesize purines de novo. In Toxoplasma gondii, this protein is Adenosine kinase (AK).